The chain runs to 1117 residues: Sodium-driven chloride bicarbonate exchanger (1117 aa).

The segment covering 1–14 (MQSGTCESFQSLSH) has biased composition (polar residues). Disordered stretches follow at residues 1–26 (MQSG…VDRG), 57–94 (GRKS…FDTP), 244–312 (KQSE…PHQQ), and 456–475 (NGTA…GPEL). Residues 1–508 (MQSGTCESFQ…DFTDALSLQC (508 aa)) are Cytoplasmic-facing. The segment covering 15–26 (QRNDEEAVVDRG) has biased composition (basic and acidic residues). Residues 58-75 (RKSHRRHRHRGHKHRKRD) are compositionally biased toward basic residues. Basic and acidic residues predominate over residues 76 to 89 (RERDSGLEDGRESP). Position 88 is a phosphoserine (Ser88). Thr93 carries the post-translational modification Phosphothreonine. Positions 247 to 263 (EPNSMDKNAGQVVSPQS) are enriched in polar residues. At Ser275 the chain carries Phosphoserine. A helical membrane pass occupies residues 509–529 (LASFLFLYCACMSPVITFGGL). Topologically, residues 530–537 (LGEATEGR) are extracellular. The chain crosses the membrane as a helical span at residues 538 to 558 (ISAIESLFGASMTGIAYSLFG). At 559–561 (GQP) the chain is on the cytoplasmic side. Residues 562-582 (LTILGSTGPVLVFEKILFKFC) traverse the membrane as a helical segment. Topologically, residues 583 to 595 (KEYGLSYLSLRAS) are extracellular. A helical transmembrane segment spans residues 596 to 616 (IGLWTATLCIILVATDASSLV). The Cytoplasmic portion of the chain corresponds to 617 to 625 (CYITRFTEE). A helical transmembrane segment spans residues 626 to 646 (AFASLICIIFIYEALEKLFEL). Over 647 to 719 (SEAYPINMHN…VGRACGHEHP (73 aa)) the chain is Extracellular. 4 N-linked (GlcNAc...) asparagine glycosylation sites follow: Asn673, Asn676, Asn686, and Asn696. A helical membrane pass occupies residues 720–740 (YVPDVLFWSVILFFSTVTLSA). Residues 741–761 (TLKQFKTSRYFPTKVRSIVSD) are Cytoplasmic-facing. The helical transmembrane segment at 762–782 (FAVFLTILCMVLIDYAIGIPS) threads the bilayer. The Extracellular segment spans residues 783 to 808 (PKLQVPSVFKPTRDDRGWFVTPLGPN). A helical transmembrane segment spans residues 809 to 829 (PWWTVIAAIIPALLCTILIFM). The Cytoplasmic portion of the chain corresponds to 830–854 (DQQITAVIINRKEHKLKKGCGYHLD). Residues 855-875 (LLMVAVMLGVCSIMGLPWFVA) traverse the membrane as a helical segment. At 876–911 (ATVLSITHVNSLKLESECSAPGEQPKFLGIREQRVT) the chain is on the extracellular side. A helical membrane pass occupies residues 912–932 (GLMIFILMGSSVFMTSILKFI). The Cytoplasmic segment spans residues 933–934 (PM). A helical membrane pass occupies residues 935–955 (PVLYGVFLYMGASSLKGIQFF). The Extracellular portion of the chain corresponds to 956–997 (DRIKLFWMPAKHQPDFIYLRHVPLRKVHLFTVIQMSCLGLLW). Residues 998–1018 (IIKVSRAAIVFPMMVLALVFV) traverse the membrane as a helical segment. Topologically, residues 1019–1117 (RKLMDFLFTK…SSFPSKSSPS (99 aa)) are cytoplasmic. A phosphoserine mark is found at Ser1056 and Ser1084.

This sequence belongs to the anion exchanger (TC 2.A.31) family. Post-translationally, N-glycosylated.

The protein resides in the basolateral cell membrane. The protein localises to the apical cell membrane. Its subcellular location is the cell projection. It localises to the dendrite. It is found in the axon. The protein resides in the perikaryon. The protein localises to the presynapse. Its subcellular location is the postsynapse. Functionally, sodium/bicarbonate cotransporter which plays an important role in regulating intracellular pH. Has been shown to act as a sodium/bicarbonate cotransporter in exchange for intracellular chloride. Has also been shown to act as a sodium/biocarbonate cotransporter which does not couple net influx of bicarbonate to net efflux of chloride, with the observed chloride efflux being due to chloride self-exchange. Controls neuronal pH and may contribute to the secretion of cerebrospinal fluid. Acting on presynaptic intracellular pH, it promotes GABA release, reduces the excitability of CA1 pyramidal neurons, and modulates short-term synaptic plasticity. Required in retinal cells to maintain normal pH which is necessary for normal vision. In the kidney, likely to mediate bicarbonate reclamation in the apical membrane of the proximal tubules. The protein is Sodium-driven chloride bicarbonate exchanger of Bos taurus (Bovine).